We begin with the raw amino-acid sequence, 661 residues long: Cartilage acidic protein 1 (661 aa).

The first 27 residues, 1-27 (MAPSADPGMSRMLPFLLLLWFLPITEG), serve as a signal peptide directing secretion. The FG-GAP 1; atypical repeat unit spans residues 46 to 88 (DYDSNPTQLNYGVAVTDVDHDGDFEIVVAGYNGPNLVLKYDRA). Residues 105–147 (YALRDRQGNAIGVTACDIDGDGREEIYFLNTNNAFSGVATYTD) form an FG-GAP 2; atypical repeat. The FG-GAP 3; atypical repeat unit spans residues 283 to 333 (AGVDDPHQHGRGVALADFNRDGKVDIVYGNWNGPHRLYLQMSTHGKVRFRD). One copy of the FG-GAP 4; atypical repeat lies at 395–437 (GDALEPEGRGTGGVVTDFDGDGMLDLILSHGESMAQPLSVFRG). One can recognise an EGF-like domain in the interval 559–605 (DTNECIQFPFVCPRDKPVCVNTYGSYRCRTNKKCSRGYEPNEDGTAC). Intrachain disulfides connect Cys-563–Cys-577, Cys-570–Cys-586, and Cys-592–Cys-605. 5 O-linked (GalNAc...) threonine glycosylation sites follow: Thr-608, Thr-618, Thr-619, Thr-621, and Thr-626.

Post-translationally, O-glycosylated. As to expression, expressed in the interterritorial matrix of articular deep zone cartilage (at protein level). Isoform 1 and isoform 2 are expressed in brain. Isoform 1 is detected in lung and chondrocytes. Detected in cartilage, bone, cultured chondrocytes and lung, and at low levels in heart. Not detected in osteoblasts.

It is found in the secreted. The protein localises to the extracellular space. The protein resides in the extracellular matrix. This Homo sapiens (Human) protein is Cartilage acidic protein 1 (CRTAC1).